The following is a 227-amino-acid chain: Transcription elongation factor A protein-like 2 (227 aa).

2 disordered regions span residues 1-145 and 202-227; these read MEKL…TNKG and FYPR…IPYV. Composition is skewed to basic and acidic residues over residues 18-43, 50-82, 90-113, 120-136, and 206-227; these read IDNE…KLEN, TGKR…KGKS, TEGK…REPE, SETR…DIPR, and GPRE…IPYV.

This sequence belongs to the TFS-II family. TFA subfamily.

The protein resides in the nucleus. In terms of biological role, may be involved in transcriptional regulation. This chain is Transcription elongation factor A protein-like 2 (TCEAL2), found in Homo sapiens (Human).